The following is a 544-amino-acid chain: Pentatricopeptide repeat-containing protein At1g66345, mitochondrial (544 aa).

A mitochondrion-targeting transit peptide spans 1–116 (MASALRRLVE…RNLRHGIKSY (116 aa)). PPR repeat units follow at residues 163 to 197 (TPLV…GFTL), 198 to 232 (SVIT…RIYP), 233 to 267 (NEIT…RCLP), 268 to 302 (SVIV…NMVV), 303 to 337 (DTIG…GFSA), 338 to 372 (NSFV…GVSP), 373 to 407 (YDET…GLMP), 408 to 442 (SCSA…GFVP), 443 to 477 (DEHT…KMSP), 478 to 512 (GFEV…LIEP), and 513 to 544 (NADI…ISVR).

This sequence belongs to the PPR family. P subfamily.

It is found in the mitochondrion. The polypeptide is Pentatricopeptide repeat-containing protein At1g66345, mitochondrial (Arabidopsis thaliana (Mouse-ear cress)).